An 80-amino-acid polypeptide reads, in one-letter code: Large ribosomal subunit protein uL24 (80 aa).

It belongs to the universal ribosomal protein uL24 family. Part of the 50S ribosomal subunit.

Its function is as follows. One of two assembly initiator proteins, it binds directly to the 5'-end of the 23S rRNA, where it nucleates assembly of the 50S subunit. Functionally, one of the proteins that surrounds the polypeptide exit tunnel on the outside of the subunit. The sequence is that of Large ribosomal subunit protein uL24 from Chlorobium phaeobacteroides (strain DSM 266 / SMG 266 / 2430).